A 566-amino-acid polypeptide reads, in one-letter code: Phenylalanine--tRNA ligase beta subunit (566 aa).

The B5 domain maps to 287–362 (YFQEEVEFNV…IGEGLSSFNP (76 aa)). Mg(2+) is bound by residues D340, D346, E349, and D350.

This sequence belongs to the phenylalanyl-tRNA synthetase beta subunit family. Type 2 subfamily. As to quaternary structure, tetramer of two alpha and two beta subunits. The cofactor is Mg(2+).

Its subcellular location is the cytoplasm. The catalysed reaction is tRNA(Phe) + L-phenylalanine + ATP = L-phenylalanyl-tRNA(Phe) + AMP + diphosphate + H(+). The protein is Phenylalanine--tRNA ligase beta subunit of Borreliella burgdorferi (strain ATCC 35210 / DSM 4680 / CIP 102532 / B31) (Borrelia burgdorferi).